A 173-amino-acid chain; its full sequence is 16S rRNA aminocarboxypropyltransferase (173 aa).

S-adenosyl-L-methionine-binding residues include T25, L72, L96, and S115.

Belongs to the TDD superfamily. TSR3 family.

It localises to the cytoplasm. It catalyses the reaction an N(1)-methylpseudouridine in rRNA + S-adenosyl-L-methionine = N(1)-methyl-N(3)-[(3S)-3-amino-3-carboxypropyl]pseudouridine in rRNA + S-methyl-5'-thioadenosine + H(+). Functionally, aminocarboxypropyltransferase that catalyzes the aminocarboxypropyl transfer on pseudouridine corresponding to position 914 in M.jannaschii 16S rRNA. It constitutes the last step in biosynthesis of the hypermodified N1-methyl-N3-(3-amino-3-carboxypropyl) pseudouridine (m1acp3-Psi). The sequence is that of 16S rRNA aminocarboxypropyltransferase from Methanococcoides burtonii (strain DSM 6242 / NBRC 107633 / OCM 468 / ACE-M).